The primary structure comprises 498 residues: Glutamate--tRNA ligase (498 aa).

The 'HIGH' region motif lies at 10-20 (PSPTGYFHIGG). Positions 252–256 (KLSKR) match the 'KMSKS' region motif. ATP is bound at residue lysine 255.

Belongs to the class-I aminoacyl-tRNA synthetase family. Glutamate--tRNA ligase type 1 subfamily. Monomer.

The protein localises to the cytoplasm. It catalyses the reaction tRNA(Glu) + L-glutamate + ATP = L-glutamyl-tRNA(Glu) + AMP + diphosphate. Functionally, catalyzes the attachment of glutamate to tRNA(Glu) in a two-step reaction: glutamate is first activated by ATP to form Glu-AMP and then transferred to the acceptor end of tRNA(Glu). The polypeptide is Glutamate--tRNA ligase (Mycoplasmoides gallisepticum (strain R(low / passage 15 / clone 2)) (Mycoplasma gallisepticum)).